The following is a 937-amino-acid chain: AP-2 complex subunit beta (937 aa).

Residue T2 is modified to N-acetylthreonine. The residue at position 4 (S4) is a Phosphoserine. Residue K265 is modified to N6-acetyllysine. Y737 bears the Phosphotyrosine; by SRC mark. The segment at 841-937 is interaction with ARRB1; it reads WKDIPNENEL…YQVYDSILKN (97 aa). At Y928 the chain carries Phosphotyrosine.

It belongs to the adaptor complexes large subunit family. As to quaternary structure, adaptor protein complex 2 (AP-2) is a heterotetramer composed of two large adaptins (alpha-type subunit AP2A1 or AP2A2 and beta-type subunit AP2B1), a medium adaptin (mu-type subunit AP2M1) and a small adaptin (sigma-type subunit AP2S1). Interacts with EPN1. Interacts with EPS15; clathrin competes with EPS15. Interacts with SNAP91; clathrin competes with SNAP91. Interacts with CLTC; clathrin competes with EPS15, SNAP91 and PIP5K1C. Interacts with LDLRAP1. Interacts with AMPH and BIN1. Interacts with ARF6 (GDP-bound). Interacts (dephosphorylated at Tyr-737) with ARRB1; phosphorylation of AP2B1 at Tyr-737 disrupts the interaction. Interacts with SLC2A8. Interacts with SCYL1 and SCYL2. Interacts with TGFBR1 and TGFBR2. Interacts with PIP5K1C; clathrin competes with PIP5K1C. Interacts with DENND1B, but not with DENND1A, nor DENND1C. Interacts with FCHO1. Interacts with RFTN1. Interacts with KIAA1107. Together with AP2A1 or AP2A2 and AP2M1, it interacts with ADAM10; this interaction facilitates ADAM10 endocytosis from the plasma membrane during long-term potentiation in hippocampal neurons. In terms of processing, phosphorylation at Tyr-737 by SRC occurs at the plasma membrane in clathrin-coated vesicles (CCVs). As to expression, expressed in the brain (at protein level).

It localises to the cell membrane. It is found in the membrane. The protein resides in the coated pit. Functionally, component of the adaptor protein complex 2 (AP-2). Adaptor protein complexes function in protein transport via transport vesicles in different membrane traffic pathways. Adaptor protein complexes are vesicle coat components and appear to be involved in cargo selection and vesicle formation. AP-2 is involved in clathrin-dependent endocytosis in which cargo proteins are incorporated into vesicles surrounded by clathrin (clathrin-coated vesicles, CCVs) which are destined for fusion with the early endosome. The clathrin lattice serves as a mechanical scaffold but is itself unable to bind directly to membrane components. Clathrin-associated adaptor protein (AP) complexes which can bind directly to both the clathrin lattice and to the lipid and protein components of membranes are considered to be the major clathrin adaptors contributing the CCV formation. AP-2 also serves as a cargo receptor to selectively sort the membrane proteins involved in receptor-mediated endocytosis. AP-2 seems to play a role in the recycling of synaptic vesicle membranes from the presynaptic surface. AP-2 recognizes Y-X-X-[FILMV] (Y-X-X-Phi) and [ED]-X-X-X-L-[LI] endocytosis signal motifs within the cytosolic tails of transmembrane cargo molecules. AP-2 may also play a role in maintaining normal post-endocytic trafficking through the ARF6-regulated, non-clathrin pathway. During long-term potentiation in hippocampal neurons, AP-2 is responsible for the endocytosis of ADAM10. The AP-2 beta subunit acts via its C-terminal appendage domain as a scaffolding platform for endocytic accessory proteins; at least some clathrin-associated sorting proteins (CLASPs) are recognized by their [DE]-X(1,2)-F-X-X-[FL]-X-X-X-R motif. The AP-2 beta subunit binds to clathrin heavy chain, promoting clathrin lattice assembly; clathrin displaces at least some CLASPs from AP2B1 which probably then can be positioned for further coat assembly. The protein is AP-2 complex subunit beta (AP2B1) of Homo sapiens (Human).